We begin with the raw amino-acid sequence, 253 residues long: Trans-aconitate 2-methyltransferase (253 aa).

Belongs to the methyltransferase superfamily. Tam family.

The protein localises to the cytoplasm. The catalysed reaction is trans-aconitate + S-adenosyl-L-methionine = (E)-3-(methoxycarbonyl)pent-2-enedioate + S-adenosyl-L-homocysteine. In terms of biological role, catalyzes the S-adenosylmethionine monomethyl esterification of trans-aconitate. The chain is Trans-aconitate 2-methyltransferase from Klebsiella pneumoniae (strain 342).